A 458-amino-acid chain; its full sequence is ATP synthase subunit beta (458 aa).

ATP is bound at residue 148-155; the sequence is GGAGVGKT.

This sequence belongs to the ATPase alpha/beta chains family. In terms of assembly, F-type ATPases have 2 components, CF(1) - the catalytic core - and CF(0) - the membrane proton channel. CF(1) has five subunits: alpha(3), beta(3), gamma(1), delta(1), epsilon(1). CF(0) has three main subunits: a(1), b(2) and c(9-12). The alpha and beta chains form an alternating ring which encloses part of the gamma chain. CF(1) is attached to CF(0) by a central stalk formed by the gamma and epsilon chains, while a peripheral stalk is formed by the delta and b chains.

It is found in the cell inner membrane. It carries out the reaction ATP + H2O + 4 H(+)(in) = ADP + phosphate + 5 H(+)(out). Its function is as follows. Produces ATP from ADP in the presence of a proton gradient across the membrane. The catalytic sites are hosted primarily by the beta subunits. The chain is ATP synthase subunit beta from Mannheimia succiniciproducens (strain KCTC 0769BP / MBEL55E).